We begin with the raw amino-acid sequence, 377 residues long: Hsc70-interacting protein 2 (377 aa).

A disordered region spans residues 68–123; sequence AKANEPANAPEDSEDEKSLSDPESDVELDMEGVIEADSDPAQPMGNYSKKATEEEV. Ser-80 carries the phosphoserine modification. Positions 89-105 are enriched in acidic residues; that stretch reads PESDVELDMEGVIEADS. TPR repeat units follow at residues 126-159, 161-193, and 195-227; these read ASEL…SPGN, LFHA…NSDL, and AGYK…DFDE. Positions 239–276 form a coiled coil; sequence NAKKIEQHRLKQERRQAERKIKERQRDQRRARKEQEKH. Positions 243–277 are enriched in basic and acidic residues; sequence IEQHRLKQERRQAERKIKERQRDQRRARKEQEKHN. 2 disordered regions span residues 243 to 302 and 344 to 377; these read IEQH…DILG and DVGA…DGLD. The span at 282–293 shows a compositional bias: gly residues; the sequence is GSSGEFSGGNPG. Positions 294–336 constitute an STI1 domain; sequence NGNMSDILGAMSDPEVSAAIQDILSNPGNITKYASNPKIYNLI. Over residues 355-369 the composition is skewed to basic and acidic residues; it reads KAGKPSEPKPKKDSA.

Belongs to the FAM10 family. Homotetramer. Interacts with Hsc70 as well as DNAJ homologs and Hsp90.

The protein resides in the cytoplasm. Its function is as follows. One HIP oligomer binds the ATPase domains of at least two Hsc70 molecules dependent on activation of the Hsc70 ATPase by Hsp40. Stabilizes the ADP state of Hsc70 that has a high affinity for substrate protein. Through its own chaperone activity, it may contribute to the interaction of Hsc70 with various target proteins. In Drosophila melanogaster (Fruit fly), this protein is Hsc70-interacting protein 2.